The sequence spans 271 residues: Putative carboxymethylenebutenolidase (271 aa).

Active-site residues include Cys-147, Asp-204, and His-236.

Belongs to the dienelactone hydrolase family.

The catalysed reaction is 2-(5-oxo-2,5-dihydrofuran-2-ylidene)acetate + H2O = 4-oxohex-2-enedioate + H(+). The sequence is that of Putative carboxymethylenebutenolidase (ysgA) from Escherichia coli O157:H7.